Reading from the N-terminus, the 172-residue chain is Adenine phosphoribosyltransferase (172 aa).

Belongs to the purine/pyrimidine phosphoribosyltransferase family. As to quaternary structure, homodimer.

The protein localises to the cytoplasm. The enzyme catalyses AMP + diphosphate = 5-phospho-alpha-D-ribose 1-diphosphate + adenine. It functions in the pathway purine metabolism; AMP biosynthesis via salvage pathway; AMP from adenine: step 1/1. Catalyzes a salvage reaction resulting in the formation of AMP, that is energically less costly than de novo synthesis. The chain is Adenine phosphoribosyltransferase from Streptococcus pyogenes serotype M5 (strain Manfredo).